The chain runs to 256 residues: Sugar fermentation stimulation protein homolog (256 aa).

The protein belongs to the SfsA family.

This Prochlorococcus marinus (strain MIT 9211) protein is Sugar fermentation stimulation protein homolog.